Here is a 307-residue protein sequence, read N- to C-terminus: Atrochrysone carboxyl ACP thioesterase (307 aa).

Histidine 104, histidine 106, aspartate 108, and histidine 109 together coordinate Zn(2+). Aspartate 108 serves as the catalytic Proton donor/acceptor.

The protein belongs to the metallo-beta-lactamase superfamily. Zn(2+) serves as cofactor.

The catalysed reaction is atrochrysone carboxyl-[ACP] + H2O = atrochrysone carboxylate + holo-[ACP] + H(+). Its pathway is secondary metabolite biosynthesis. Functionally, atrochrysone carboxyl ACP thioesterase; part of the gene cluster that mediates the biosynthesis of monodictyphenone, a prenyl xanthone derivative. The pathway begins with the synthesis of atrochrysone thioester by the polyketide synthase (PKS) mdpG. The atrochrysone carboxyl ACP thioesterase mdpF then breaks the thioester bond and releases the atrochrysone carboxylic acid from mdpG. The atrochrysone carboxylic acid is then converted to atrochrysone which is further transformed into emodin anthrone. The next step is performed by the anthrone oxygenase mdpH that catalyzes the oxidation of emodinanthrone to emodin. Emodin is further modified to yield monodictyphenone via several steps involving mdpB, mdpC mdpJ, mdpK and mdpL. The short chain dehydrogenase mdpC converts the tautomers of emodin hydroquinone into the 3-hydroxy-3,4-dihydroan-thracen-1(2H)-one derivative. These enzymes with xptA, xptB and xptC are also proposed to be involved in the synthesis of shamixanthone from emodin. Especially, direct reduction of emodin by the short chain dehydrogenase mdpC followed by dehydration catalyzed by the scytalone dehydratase-like protein mdpB gives loss of oxygen and formation of chrysophanol intermediate in two simple steps. The chain is Atrochrysone carboxyl ACP thioesterase from Emericella nidulans (strain FGSC A4 / ATCC 38163 / CBS 112.46 / NRRL 194 / M139) (Aspergillus nidulans).